The chain runs to 248 residues: DNA repair protein RecO (248 aa).

The protein belongs to the RecO family.

In terms of biological role, involved in DNA repair and RecF pathway recombination. The polypeptide is DNA repair protein RecO (Bacillus cytotoxicus (strain DSM 22905 / CIP 110041 / 391-98 / NVH 391-98)).